Consider the following 545-residue polypeptide: Chaperonin GroEL (545 aa).

Residues 30 to 33, lysine 51, 87 to 91, glycine 415, and aspartate 495 contribute to the ATP site; these read TLGP and DGTTT.

Belongs to the chaperonin (HSP60) family. In terms of assembly, forms a cylinder of 14 subunits composed of two heptameric rings stacked back-to-back. Interacts with the co-chaperonin GroES.

The protein resides in the cytoplasm. The catalysed reaction is ATP + H2O + a folded polypeptide = ADP + phosphate + an unfolded polypeptide.. Its function is as follows. Together with its co-chaperonin GroES, plays an essential role in assisting protein folding. The GroEL-GroES system forms a nano-cage that allows encapsulation of the non-native substrate proteins and provides a physical environment optimized to promote and accelerate protein folding. The polypeptide is Chaperonin GroEL (Shewanella amazonensis (strain ATCC BAA-1098 / SB2B)).